We begin with the raw amino-acid sequence, 283 residues long: Putative aquaporin NIP4-1 (283 aa).

The residue at position 1 (methionine 1) is an N-acetylmethionine. A run of 2 helical transmembrane segments spans residues 45–65 and 70–90; these read LIAE…VVVV and GGTI…MVMI. The NPA 1 motif lies at 102–104; that stretch reads NPA. 3 helical membrane-spanning segments follow: residues 122–142, 161–181, and 189–209; these read LYIG…RLMF, ALVA…GVAT, and LAGI…GPIS. The NPA 2 motif lies at 214–216; that stretch reads NPA. Residues 231-251 traverse the membrane as a helical segment; the sequence is IWVYIVGPVLGVISGGFVYNL. Serine 267 bears the Phosphoserine mark.

This sequence belongs to the MIP/aquaporin (TC 1.A.8) family. NIP (TC 1.A.8.12) subfamily.

It localises to the membrane. In terms of biological role, potential aquaporin, which may facilitate the transport of water and small neutral solutes across cell membranes. This Arabidopsis thaliana (Mouse-ear cress) protein is Putative aquaporin NIP4-1 (NIP4-1).